The primary structure comprises 242 residues: Large ribosomal subunit protein uL1 (242 aa).

This sequence belongs to the universal ribosomal protein uL1 family. In terms of assembly, part of the 50S ribosomal subunit.

In terms of biological role, binds directly to 23S rRNA. The L1 stalk is quite mobile in the ribosome, and is involved in E site tRNA release. Its function is as follows. Protein L1 is also a translational repressor protein, it controls the translation of the L11 operon by binding to its mRNA. This is Large ribosomal subunit protein uL1 from Streptomyces virginiae (Streptomyces cinnamonensis).